A 128-amino-acid chain; its full sequence is MSNLPNELKYSEEHEWVKVEGDKVRIGITDFAQSELGDIVFVELPEVGDEVEADEPFGSVESVKTVSELYAPVSGKVVEVNEELDDNPEYVNESPYEKAWMIVVEPSDASQVEELMSADEYKEMISEE.

The region spanning 23–105 (KVRIGITDFA…YEKAWMIVVE (83 aa)) is the Lipoyl-binding domain. Position 64 is an N6-lipoyllysine (Lys64).

The protein belongs to the GcvH family. In terms of assembly, the glycine cleavage system is composed of four proteins: P, T, L and H. (R)-lipoate serves as cofactor.

The glycine cleavage system catalyzes the degradation of glycine. The H protein shuttles the methylamine group of glycine from the P protein to the T protein. In terms of biological role, is also involved in protein lipoylation via its role as an octanoyl/lipoyl carrier protein intermediate. This Halalkalibacterium halodurans (strain ATCC BAA-125 / DSM 18197 / FERM 7344 / JCM 9153 / C-125) (Bacillus halodurans) protein is Glycine cleavage system H protein.